The primary structure comprises 69 residues: MEQKTLQVEGMSCQHCVKAVETSVGELDGVSAVHVNLEAGKVDVSFDADKVSVKDIADAIEDQGYDVAK.

The HMA domain maps to 2-68; the sequence is EQKTLQVEGM…AIEDQGYDVA (67 aa). The Cu cation site is built by Cys-13 and Cys-16.

In terms of assembly, monomer in the absence of copper. Homodimer in the presence of copper ions. Forms a heterodimer (electrostatic interactions) with CopA during the transfer of Cu(+).

The protein resides in the cytoplasm. Its function is as follows. Chaperone that serves for the intracellular sequestration and transport of Cu(+). Delivers Cu(+) to the copper-transporting ATPase CopA. Functions in E.coli to transfer Cu(+) to CopA missing its first metal-binding domain. This chain is Copper chaperone CopZ (copZ), found in Bacillus subtilis (strain 168).